Here is a 432-residue protein sequence, read N- to C-terminus: Adenylosuccinate synthetase (432 aa).

GTP contacts are provided by residues 13-19 and 41-43; these read GDEGKGK and GHT. Asp14 acts as the Proton acceptor in catalysis. 2 residues coordinate Mg(2+): Asp14 and Gly41. Residues 14 to 17, 39 to 42, Thr130, Arg144, Gln225, Thr240, and Arg304 each bind IMP; these read DEGK and NAGH. The active-site Proton donor is the His42. Position 300–306 (300–306) interacts with substrate; the sequence is ATTGRSR. GTP is bound by residues Arg306, 332–334, and 415–417; these read KLD and STG.

The protein belongs to the adenylosuccinate synthetase family. Homodimer. Mg(2+) serves as cofactor.

It is found in the cytoplasm. The enzyme catalyses IMP + L-aspartate + GTP = N(6)-(1,2-dicarboxyethyl)-AMP + GDP + phosphate + 2 H(+). The protein operates within purine metabolism; AMP biosynthesis via de novo pathway; AMP from IMP: step 1/2. Functionally, plays an important role in the de novo pathway of purine nucleotide biosynthesis. Catalyzes the first committed step in the biosynthesis of AMP from IMP. The polypeptide is Adenylosuccinate synthetase (Yersinia pestis bv. Antiqua (strain Antiqua)).